Consider the following 200-residue polypeptide: Large ribosomal subunit protein uL4 (200 aa).

The disordered stretch occupies residues 38–65 (GRQGSKAQKTRSEVSGGGKKPWRQKGTG).

This sequence belongs to the universal ribosomal protein uL4 family. Part of the 50S ribosomal subunit.

One of the primary rRNA binding proteins, this protein initially binds near the 5'-end of the 23S rRNA. It is important during the early stages of 50S assembly. It makes multiple contacts with different domains of the 23S rRNA in the assembled 50S subunit and ribosome. Functionally, forms part of the polypeptide exit tunnel. The protein is Large ribosomal subunit protein uL4 of Pseudomonas aeruginosa (strain LESB58).